The sequence spans 594 residues: CDPK-related kinase 4 (594 aa).

Positions 1–131 (MGHCYSRNIS…DSGGGERLDK (131 aa)) are disordered. Glycine 2 is lipidated: N-myristoyl glycine. Over residues 37 to 58 (IPQSPVASGTPEVNSYNISPFQ) the composition is skewed to polar residues. Basic and acidic residues predominate over residues 116-131 (VVDHGGDSGGGERLDK). The region spanning 143–405 (YELGKEVGRG…AAQALAHPWL (263 aa)) is the Protein kinase domain. Residues 149 to 157 (VGRGHFGHT) and lysine 175 contribute to the ATP site. Aspartate 271 (proton acceptor) is an active-site residue. Residue serine 311 is modified to Phosphoserine. The autoinhibitory domain stretch occupies residues 409–439 (NPGLLLDFSVYKLVKSYIRASPFRRSALKAL). The interval 428-448 (ASPFRRSALKALSKAIPDEEL) is calmodulin binding (CaMBD). 4 EF-hand domains span residues 446 to 481 (EELV…ATDA), 482 to 517 (MMES…VYQL), 518 to 557 (EALE…GPSA), and 558 to 587 (YPLL…VTVR). Ca(2+) contacts are provided by aspartate 462, lysine 501, glutamate 506, asparagine 539, glutamate 546, serine 567, aspartate 569, and lysine 571. Serine 573 bears the Phosphoserine mark.

Belongs to the protein kinase superfamily. Ser/Thr protein kinase family. CDPK subfamily. Binds calmodulin (CaM) in a calcium-dependent manner. Post-translationally, autophosphorylated.

The protein resides in the cell membrane. It carries out the reaction L-seryl-[protein] + ATP = O-phospho-L-seryl-[protein] + ADP + H(+). The enzyme catalyses L-threonyl-[protein] + ATP = O-phospho-L-threonyl-[protein] + ADP + H(+). Its activity is regulated as follows. Activated by calcium and calmodulin. Autophosphorylation may play an important role in the regulation of the kinase activity. Functionally, may play a role in signal transduction pathways that involve calcium as a second messenger. This Arabidopsis thaliana (Mouse-ear cress) protein is CDPK-related kinase 4 (CRK4).